Reading from the N-terminus, the 454-residue chain is tRNA modification GTPase MnmE (454 aa).

Residues arginine 23, glutamate 80, and lysine 120 each coordinate (6S)-5-formyl-5,6,7,8-tetrahydrofolate. The region spanning 216–377 (GMKVVIAGRP…LRNHLKQSMG (162 aa)) is the TrmE-type G domain. Asparagine 226 contributes to the K(+) binding site. Residues 226-231 (NAGKSS), 245-251 (TDIAGTT), 270-273 (DTAG), 335-338 (NKAD), and 358-360 (SAR) contribute to the GTP site. Mg(2+) is bound at residue serine 230. K(+) contacts are provided by threonine 245, isoleucine 247, and threonine 250. Residue threonine 251 coordinates Mg(2+). Lysine 454 provides a ligand contact to (6S)-5-formyl-5,6,7,8-tetrahydrofolate.

This sequence belongs to the TRAFAC class TrmE-Era-EngA-EngB-Septin-like GTPase superfamily. TrmE GTPase family. In terms of assembly, homodimer. Heterotetramer of two MnmE and two MnmG subunits. Requires K(+) as cofactor.

The protein localises to the cytoplasm. In terms of biological role, exhibits a very high intrinsic GTPase hydrolysis rate. Involved in the addition of a carboxymethylaminomethyl (cmnm) group at the wobble position (U34) of certain tRNAs, forming tRNA-cmnm(5)s(2)U34. The polypeptide is tRNA modification GTPase MnmE (Escherichia coli O7:K1 (strain IAI39 / ExPEC)).